Consider the following 741-residue polypeptide: MAPRKNAKGGGGNSSSSGSGSGSGSGSPSTGSSGSSSSPGARREAKHGGHKNGRRGGISGGSFFTWFMVIALLGVWTSVAVVWFDLVDYEEVLGKLGVYDADGDGDFDVDDAKVLLGLKERSPSERTFPPEEEAETHAELEEQAPEGADIQNVEDEVKEQIQSLLQESVHTDHDLEADGLAGEPQPEVEDFLTVTDSDDRFEDLEPGTVHEEIEDTYHVEDTASQNHPNDMEEMTNEQENSDPSEAVTDAGVLLPHAEEVRHQDYDEPVYEPSEHEGVAISDNTIDDSSIISEEINVASVEEQQDTPPVKKKKPKLLNKFDKTIKAELDAAEKLRKRGKIEEAVNAFEELVRKYPQSPRARYGKAQCEDDLAEKQRSNEVLRRAIETYQEAADLPDAPTDLVKLSLKRRSERQQFLGHMRGSLLTLQRLVQLFPSDTTLKNDLGVGYLLLGDNDSAKKVYEEVLNVTPNDGFAKVHYGFILKAQNKISESIPYLKEGIESGDPGTDDGRFYFHLGDAMQRVGNKEAYKWYELGHKRGHFASVWQRSLYNVNGLKAQPWWTPRETGYTELVKSLERNWKLIRDEGLMVMDKAKGLFLPEDENLREKGDWSQFTLWQQGRKNENACKGAPKTCALLEKFSETTGCRRGQIKYSIMHPGTHVWPHTGPTNCRLRMHLGLVIPKEGCKIRCANETRTWEEGKVLIFDDSFEHEVWQDASSFRLIFIVDVWHPELTPQQRRSLPAI.

The disordered stretch occupies residues 1-54 (MAPRKNAKGGGGNSSSSGSGSGSGSGSPSTGSSGSSSSPGARREAKHGGHKNGR). At 1 to 62 (MAPRKNAKGG…GRRGGISGGS (62 aa)) the chain is on the cytoplasmic side. The segment covering 8–25 (KGGGGNSSSSGSGSGSGS) has biased composition (gly residues). Ser15 carries the post-translational modification Phosphoserine. Residues 26 to 40 (GSPSTGSSGSSSSPG) are compositionally biased toward low complexity. Residues 63–83 (FFTWFMVIALLGVWTSVAVVW) traverse the membrane as a helical; Signal-anchor for type II membrane protein segment. Residues 84 to 741 (FDLVDYEEVL…PQQRRSLPAI (658 aa)) lie on the Lumenal side of the membrane. Ca(2+)-binding residues include Asp100, Asp102, Asp104, Asp106, and Asp111. Disordered regions lie at residues 120–141 (ERSPSERTFPPEEEAETHAELE) and 222–244 (TASQNHPNDMEEMTNEQENSDPS). Positions 231-242 (MEEMTNEQENSD) are enriched in acidic residues. TPR repeat units follow at residues 324–357 (IKAELDAAEKLRKRGKIEEAVNAFEELVRKYPQS), 365–398 (AQCEDDLAEKQRSNEVLRRAIETYQEAADLPDAP), 437–470 (TTLKNDLGVGYLLLGDNDSAKKVYEEVLNVTPND), 472–504 (FAKVHYGFILKAQNKISESIPYLKEGIESGDPG), and 508–540 (GRFYFHLGDAMQRVGNKEAYKWYELGHKRGHFA). N-linked (GlcNAc...) asparagine glycosylation is present at Asn453. Trp608 provides a ligand contact to 2-oxoglutarate. Cys624 and Cys631 are disulfide-bonded. A 2-oxoglutarate-binding site is contributed by Ser651. His662 serves as a coordination point for Fe cation. 671 to 673 (RMH) provides a ligand contact to 2-oxoglutarate. N-linked (GlcNAc...) asparagine glycosylation is present at Asn689. His708 lines the Fe cation pocket. Residue Arg718 participates in 2-oxoglutarate binding.

This sequence belongs to the aspartyl/asparaginyl beta-hydroxylase family. In terms of assembly, monomer. Isoform 2 interacts with CASQ2. Requires Fe cation as cofactor. In terms of tissue distribution, isoform 1 is detected in heart, liver and ovary (at protein level). Detected in heart ventricle. Isoform 1 is widely expressed. Isoform 2 is detected in heart and skeletal muscle.

It localises to the endoplasmic reticulum membrane. Its subcellular location is the sarcoplasmic reticulum membrane. It catalyses the reaction L-aspartyl-[protein] + 2-oxoglutarate + O2 = 3-hydroxy-L-aspartyl-[protein] + succinate + CO2. Its function is as follows. Specifically hydroxylates an Asp or Asn residue in certain epidermal growth factor-like (EGF) domains of a number of proteins. In Mus musculus (Mouse), this protein is Aspartyl/asparaginyl beta-hydroxylase (Asph).